The primary structure comprises 494 residues: 4-trimethylaminobutyraldehyde dehydrogenase (494 aa).

Ser-2 carries the N-acetylserine modification. Position 30 is an N6-acetyllysine; alternate (Lys-30). Lys-30 carries the post-translational modification N6-succinyllysine; alternate. An N6-succinyllysine modification is found at Lys-59. NAD(+) is bound by residues Lys-180 and 232-236 (GSVPT). Residue Glu-254 is the Proton acceptor of the active site. Cys-288 acts as the Nucleophile in catalysis. Position 298 is an N6-acetyllysine (Lys-298). Lys-303 carries the post-translational modification N6-acetyllysine; alternate. An N6-succinyllysine; alternate modification is found at Lys-303. Lys-344 carries the N6-acetyllysine modification. Glu-391 is an NAD(+) binding site.

It belongs to the aldehyde dehydrogenase family. In terms of assembly, homotetramer.

It is found in the cytoplasm. Its subcellular location is the cytosol. It catalyses the reaction 4-(trimethylamino)butanal + NAD(+) + H2O = 4-(trimethylamino)butanoate + NADH + 2 H(+). The catalysed reaction is an aldehyde + NAD(+) + H2O = a carboxylate + NADH + 2 H(+). It carries out the reaction 4-aminobutanal + NAD(+) + H2O = 4-aminobutanoate + NADH + 2 H(+). The enzyme catalyses formaldehyde + NAD(+) + H2O = formate + NADH + 2 H(+). It catalyses the reaction acetaldehyde + NAD(+) + H2O = acetate + NADH + 2 H(+). The catalysed reaction is imidazole-4-acetaldehyde + NAD(+) + H2O = imidazole-4-acetate + NADH + 2 H(+). It carries out the reaction acrolein + NAD(+) + H2O = acrylate + NADH + 2 H(+). The enzyme catalyses (5-hydroxyindol-3-yl)acetaldehyde + NAD(+) + H2O = (5-hydroxyindol-3-yl)acetate + NADH + 2 H(+). It catalyses the reaction 3,4-dihydroxyphenylacetaldehyde + NAD(+) + H2O = 3,4-dihydroxyphenylacetate + NADH + 2 H(+). The catalysed reaction is spermine monoaldehyde + NAD(+) + H2O = N-(2-carboxyethyl)spermidine + NADH + 2 H(+). It carries out the reaction propanal + NAD(+) + H2O = propanoate + NADH + 2 H(+). The enzyme catalyses butanal + NAD(+) + H2O = butanoate + NADH + 2 H(+). It catalyses the reaction pentanal + NAD(+) + H2O = pentanoate + NADH + 2 H(+). The catalysed reaction is hexanal + NAD(+) + H2O = hexanoate + NADH + 2 H(+). Its pathway is amine and polyamine biosynthesis; carnitine biosynthesis. Its function is as follows. Converts gamma-trimethylaminobutyraldehyde into gamma-butyrobetaine with high efficiency (in vitro). Can catalyze the irreversible oxidation of a broad range of aldehydes to the corresponding acids in an NAD-dependent reaction, but with low efficiency. Catalyzes the oxidation of aldehydes arising from biogenic amines and polyamines. This Sus scrofa (Pig) protein is 4-trimethylaminobutyraldehyde dehydrogenase (ALDH9A1).